Consider the following 424-residue polypeptide: Histidine--tRNA ligase (424 aa).

This sequence belongs to the class-II aminoacyl-tRNA synthetase family. Homodimer.

The protein resides in the cytoplasm. It catalyses the reaction tRNA(His) + L-histidine + ATP = L-histidyl-tRNA(His) + AMP + diphosphate + H(+). This Pediococcus pentosaceus (strain ATCC 25745 / CCUG 21536 / LMG 10740 / 183-1w) protein is Histidine--tRNA ligase.